We begin with the raw amino-acid sequence, 461 residues long: Putative dipeptidase CPSG_01350 (461 aa).

The segment covering 1 to 10 (MSARDNEKGS) has biased composition (basic and acidic residues). The segment at 1 to 31 (MSARDNEKGSARSQPSHAAASEIENVPRPSR) is disordered. The chain crosses the membrane as a helical span at residues 35-52 (WTGTMIKVFIICACAGIV). Residues histidine 90, aspartate 92, and glutamate 203 each contribute to the Zn(2+) site. Cysteine 142 and cysteine 232 are disulfide-bonded. Histidine 230 lines the substrate pocket. Residues histidine 274 and histidine 295 each coordinate Zn(2+). Substrate is bound by residues arginine 306 and aspartate 366. N-linked (GlcNAc...) asparagine glycosylation occurs at asparagine 379.

The protein belongs to the metallo-dependent hydrolases superfamily. Peptidase M19 family. It depends on Zn(2+) as a cofactor.

It is found in the membrane. It catalyses the reaction an L-aminoacyl-L-amino acid + H2O = 2 an L-alpha-amino acid. Its function is as follows. Hydrolyzes a wide range of dipeptides. This is Putative dipeptidase CPSG_01350 from Coccidioides posadasii (strain RMSCC 757 / Silveira) (Valley fever fungus).